Here is a 1451-residue protein sequence, read N- to C-terminus: Murinoglobulin-2 (1451 aa).

A signal peptide spans 1–27; sequence MWKSRRAQLCLFSVLLAFLPSASSLNG. 3 cysteine pairs are disulfide-bonded: C48-C86, C251-C276, and C269-C288. N55 is a glycosylation site (N-linked (GlcNAc...) asparagine). N294, N313, and N500 each carry an N-linked (GlcNAc...) asparagine glycan. Disulfide bonds link C461–C555, C587–C773, and C634–C680. The segment at 677–734 is bait region; sequence PKICFDSAPMSGPRGKFDLAFSSEVSGTLQKGSSKRPQPEEPPREDPPPKDPLAETIR. The segment at 703-728 is disordered; sequence GTLQKGSSKRPQPEEPPREDPPPKDP. Positions 713 to 728 are enriched in basic and acidic residues; it reads PQPEEPPREDPPPKDP. N-linked (GlcNAc...) asparagine glycans are attached at residues N749, N776, and N871. Disulfide bonds link C849–C885, C923–C1274, C1081–C1104, and C1298–C1444. The isoglutamyl cysteine thioester (Cys-Gln) cross-link spans 974-977; it reads CGEQ. An N-linked (GlcNAc...) asparagine glycan is attached at N1401.

The protein belongs to the protease inhibitor I39 (alpha-2-macroglobulin) family. As to quaternary structure, monomer. In terms of tissue distribution, plasma.

The protein resides in the secreted. A proteinase activates the inhibitor by specific proteolysis in the bait region, which, by an unknown mechanism leads to reaction at the cysteinyl-glutamyl internal thiol ester site and to a conformational change, whereby the proteinase is trapped and/or covalently bound to the inhibitor. While in the tetrameric proteinase inhibitors steric inhibition is sufficiently strong, monomeric forms need a covalent linkage between the activated glutamyl residue of the original thiol ester and a terminal amino group of a lysine or another nucleophilic group on the proteinase, for inhibition to be effective. The protein is Murinoglobulin-2 (Mug2) of Mus musculus (Mouse).